We begin with the raw amino-acid sequence, 553 residues long: Dihydroxy-acid dehydratase (553 aa).

Aspartate 78 is a binding site for Mg(2+). Cysteine 119 contributes to the [2Fe-2S] cluster binding site. Residues aspartate 120 and lysine 121 each coordinate Mg(2+). Lysine 121 carries the N6-carboxylysine modification. Cysteine 191 provides a ligand contact to [2Fe-2S] cluster. Residue glutamate 444 participates in Mg(2+) binding. Serine 470 serves as the catalytic Proton acceptor.

It belongs to the IlvD/Edd family. As to quaternary structure, homodimer. The cofactor is [2Fe-2S] cluster. Requires Mg(2+) as cofactor.

The catalysed reaction is (2R)-2,3-dihydroxy-3-methylbutanoate = 3-methyl-2-oxobutanoate + H2O. It carries out the reaction (2R,3R)-2,3-dihydroxy-3-methylpentanoate = (S)-3-methyl-2-oxopentanoate + H2O. It participates in amino-acid biosynthesis; L-isoleucine biosynthesis; L-isoleucine from 2-oxobutanoate: step 3/4. It functions in the pathway amino-acid biosynthesis; L-valine biosynthesis; L-valine from pyruvate: step 3/4. Functions in the biosynthesis of branched-chain amino acids. Catalyzes the dehydration of (2R,3R)-2,3-dihydroxy-3-methylpentanoate (2,3-dihydroxy-3-methylvalerate) into 2-oxo-3-methylpentanoate (2-oxo-3-methylvalerate) and of (2R)-2,3-dihydroxy-3-methylbutanoate (2,3-dihydroxyisovalerate) into 2-oxo-3-methylbutanoate (2-oxoisovalerate), the penultimate precursor to L-isoleucine and L-valine, respectively. This Methanosarcina barkeri (strain Fusaro / DSM 804) protein is Dihydroxy-acid dehydratase.